A 325-amino-acid chain; its full sequence is Melanocortin receptor 5 (325 aa).

Topologically, residues 1-37 are extracellular; sequence MNSSSTLTVLNLTLNASEDGILGSNVKNKSLACEEMG. Asparagine 2, asparagine 11, asparagine 15, and asparagine 28 each carry an N-linked (GlcNAc...) asparagine glycan. A helical transmembrane segment spans residues 38-61; the sequence is IAVEVFLTLGLVSLLENILVIGAI. Over 62–73 the chain is Cytoplasmic; the sequence is VKNKNLHSPMYF. The chain crosses the membrane as a helical span at residues 74-97; the sequence is FVGSLAVADMLVSMSNAWETVTIY. At 98-114 the chain is on the extracellular side; that stretch reads LLNNKHLVIADTFVRHI. A helical transmembrane segment spans residues 115-138; that stretch reads DNVFDSMICISVVASMCSLLAIAV. Residues 139–155 lie on the Cytoplasmic side of the membrane; the sequence is DRYITIFYALRYHHIMT. The helical transmembrane segment at 156 to 179 threads the bilayer; that stretch reads ARRSGVIIACIWTFCISCGIVFII. The Extracellular portion of the chain corresponds to 180 to 186; the sequence is YYESKYV. Residues 187-211 form a helical membrane-spanning segment; it reads IICLISMFFTMLFFMVSLYIHMFLL. Residues 212–239 lie on the Cytoplasmic side of the membrane; sequence ARNHVKRIAASPRYNSVRQRTSMKGAIT. A helical transmembrane segment spans residues 240–265; that stretch reads LTMLLGIFIVCWSPFFLHLILMISCP. At 266-273 the chain is on the extracellular side; the sequence is QNVYCSCF. The helical transmembrane segment at 274–297 threads the bilayer; sequence MSYFNMYLILIMCNSVIDPLIYAL. At 298-325 the chain is on the cytoplasmic side; it reads RSQEMRRTFKEIVCCHGFRRPCRLLGGY. S-palmitoyl cysteine attachment occurs at residues cysteine 311 and cysteine 312.

Belongs to the G-protein coupled receptor 1 family. Skin, adrenal gland, skeletal muscle, bone marrow, spleen, thymus, gonads, uterus and brain.

It is found in the cell membrane. Its function is as follows. Receptor for MSH (alpha, beta and gamma) and ACTH. The activity of this receptor is mediated by G proteins which activate adenylate cyclase. This receptor is a possible mediator of the immunomodulation properties of melanocortins. This Mus musculus (Mouse) protein is Melanocortin receptor 5 (Mc5r).